Here is a 305-residue protein sequence, read N- to C-terminus: ATP synthase gamma chain (305 aa).

Belongs to the ATPase gamma chain family. As to quaternary structure, F-type ATPases have 2 components, CF(1) - the catalytic core - and CF(0) - the membrane proton channel. CF(1) has five subunits: alpha(3), beta(3), gamma(1), delta(1), epsilon(1). CF(0) has three main subunits: a, b and c.

It localises to the cell membrane. Functionally, produces ATP from ADP in the presence of a proton gradient across the membrane. The gamma chain is believed to be important in regulating ATPase activity and the flow of protons through the CF(0) complex. This is ATP synthase gamma chain from Streptomyces griseus subsp. griseus (strain JCM 4626 / CBS 651.72 / NBRC 13350 / KCC S-0626 / ISP 5235).